The chain runs to 333 residues: MQFIDLAEIHVKAGKGGDGIIAFRREKYVPAGGPSGGNGGNGGSVILKAVSNLQTLLDFRYAHVFKAENGQRGGPNNRTGACGADLVIEVPCGTMVWDAETGELLGDLTTPGQTLLVAKGGKGGLGNKHFLSNHQRAPDYALPGLEGEERHLRLELKLLAEVGIIGLPNAGKSTLISVLSAARPKIADYPFTTLVPNLGVVRQPNGDGTVFADIPGLIAGAHTGLGLGHEFLRHIERTRLLLHLIDATAEDVVAAYQTIRDELVAYGHGLGDRPQIVALNKIDALDASQITTLQETLAAYVGQRVFAISAVARQGLEPLLEAVWQELGVSVSH.

Residues 1 to 159 (MQFIDLAEIH…RHLRLELKLL (159 aa)) form the Obg domain. Residues 160 to 328 (AEVGIIGLPN…LLEAVWQELG (169 aa)) form the OBG-type G domain. Residues 166–173 (GLPNAGKS), 191–195 (FTTLV), 213–216 (DIPG), 280–283 (NKID), and 309–311 (SAV) each bind GTP. Mg(2+)-binding residues include Ser173 and Thr193.

Belongs to the TRAFAC class OBG-HflX-like GTPase superfamily. OBG GTPase family. As to quaternary structure, monomer. The cofactor is Mg(2+).

The protein localises to the cytoplasm. Functionally, an essential GTPase which binds GTP, GDP and possibly (p)ppGpp with moderate affinity, with high nucleotide exchange rates and a fairly low GTP hydrolysis rate. Plays a role in control of the cell cycle, stress response, ribosome biogenesis and in those bacteria that undergo differentiation, in morphogenesis control. This is GTPase Obg from Thermosynechococcus vestitus (strain NIES-2133 / IAM M-273 / BP-1).